The sequence spans 492 residues: Catalase-4 (492 aa).

Residues His-65 and Asn-138 contribute to the active site. Tyr-348 contacts heme.

It belongs to the catalase family. In terms of assembly, homotetramer. The cofactor is heme.

The protein resides in the peroxisome. It is found in the glyoxysome. It carries out the reaction 2 H2O2 = O2 + 2 H2O. In terms of biological role, occurs in almost all aerobically respiring organisms and serves to protect cells from the toxic effects of hydrogen peroxide. In Glycine max (Soybean), this protein is Catalase-4 (CAT4).